A 261-amino-acid chain; its full sequence is Receptor expression-enhancing protein 4 (261 aa).

The next 2 membrane-spanning stretches (helical) occupy residues 1–21 (MVSW…YPAY) and 35–55 (YVRW…ETFT). The segment at 167–261 (YTDALYPDEP…KKPAQSEPEN (95 aa)) is disordered. The segment covering 221–230 (KSLQRSQSLR) has biased composition (polar residues).

It belongs to the DP1 family. In terms of assembly, interacts with microtubules. In terms of tissue distribution, during gastrulation, expressed on the dorsal side of the embryo and then in the neural plate and neural tube. At tailbud stages, expressed in the somites, neural tube and otic vesicle.

Its subcellular location is the endoplasmic reticulum membrane. In terms of biological role, microtubule-binding protein required to ensure proper cell division and nuclear envelope reassembly by sequestering the endoplasmic reticulum away from chromosomes during mitosis. Probably acts by clearing the endoplasmic reticulum membrane from metaphase chromosomes. May play a role in the maintenance of both the nervous system and the musculature. This is Receptor expression-enhancing protein 4 (reep4) from Xenopus laevis (African clawed frog).